The primary structure comprises 1367 residues: DNA polymerase III PolC-type (1367 aa).

Residues 358–513 (FVVLDFETTG…DDARVTAQVF (156 aa)) enclose the Exonuclease domain.

This sequence belongs to the DNA polymerase type-C family. PolC subfamily.

It is found in the cytoplasm. It catalyses the reaction DNA(n) + a 2'-deoxyribonucleoside 5'-triphosphate = DNA(n+1) + diphosphate. In terms of biological role, required for replicative DNA synthesis. This DNA polymerase also exhibits 3' to 5' exonuclease activity. The protein is DNA polymerase III PolC-type of Thermotoga maritima (strain ATCC 43589 / DSM 3109 / JCM 10099 / NBRC 100826 / MSB8).